The chain runs to 922 residues: Lacticin 481/lactococcin biosynthesis protein LcnDR2 (922 aa).

Its function is as follows. Could be implicated in the processing or the export process of the lantibiotic lacticin 481/lactococcin DR. The sequence is that of Lacticin 481/lactococcin biosynthesis protein LcnDR2 (lcnDR2) from Lactococcus lactis subsp. lactis (Streptococcus lactis).